A 161-amino-acid polypeptide reads, in one-letter code: Peptidyl-prolyl cis-trans isomerase 10 (161 aa).

The 153-residue stretch at 1-153 (MSVTLHTTSG…VQQKIQNVTI (153 aa)) folds into the PPIase cyclophilin-type domain.

It belongs to the cyclophilin-type PPIase family. PPIL3 subfamily.

It carries out the reaction [protein]-peptidylproline (omega=180) = [protein]-peptidylproline (omega=0). In terms of biological role, PPIases accelerate the folding of proteins. It catalyzes the cis-trans isomerization of proline imidic peptide bonds in oligopeptides. In Caenorhabditis elegans, this protein is Peptidyl-prolyl cis-trans isomerase 10 (cyn-10).